A 394-amino-acid chain; its full sequence is Protein-glutamate methylesterase/protein-glutamine glutaminase 2 (394 aa).

The 118-residue stretch at 4–121 (KVLVVDDSSF…ARNRDEAISL (118 aa)) folds into the Response regulatory domain. Residue Asp55 is modified to 4-aspartylphosphate. The CheB-type methylesterase domain maps to 202 to 394 (SGKKYQLMAI…AERILVEVGR (193 aa)). Active-site residues include Ser214, His241, and Asp337.

This sequence belongs to the CheB family. Phosphorylated by CheA. Phosphorylation of the N-terminal regulatory domain activates the methylesterase activity.

The protein resides in the cytoplasm. The enzyme catalyses [protein]-L-glutamate 5-O-methyl ester + H2O = L-glutamyl-[protein] + methanol + H(+). It catalyses the reaction L-glutaminyl-[protein] + H2O = L-glutamyl-[protein] + NH4(+). Functionally, involved in chemotaxis. Part of a chemotaxis signal transduction system that modulates chemotaxis in response to various stimuli. Catalyzes the demethylation of specific methylglutamate residues introduced into the chemoreceptors (methyl-accepting chemotaxis proteins or MCP) by CheR. Also mediates the irreversible deamidation of specific glutamine residues to glutamic acid. The sequence is that of Protein-glutamate methylesterase/protein-glutamine glutaminase 2 from Photobacterium profundum (strain SS9).